A 270-amino-acid chain; its full sequence is NADPH-dependent aldehyde reductase-like protein, chloroplastic (270 aa).

A chloroplast-targeting transit peptide spans 1 to 53; sequence MSTHSSISQPPLPLAGRVAIVTGSSRGIGRAIAIHLAELGARIVINYTSKAAD. 26–50 is an NADP(+) binding site; that stretch reads RGIGRAIAIHLAELGARIVINYTSK. Serine 165 lines the substrate pocket. Residue tyrosine 178 is the Proton acceptor of the active site.

Belongs to the short-chain dehydrogenases/reductases (SDR) family.

The protein localises to the plastid. It localises to the chloroplast. Aldehyde reductase that catalyzes the reduction of the aldehyde carbonyl groups on saturated and alpha,beta-unsaturated aldehydes with more than 5 carbons. This chain is NADPH-dependent aldehyde reductase-like protein, chloroplastic, found in Arabidopsis thaliana (Mouse-ear cress).